A 556-amino-acid chain; its full sequence is DNA ligase B (556 aa).

Residue Lys124 is the N6-AMP-lysine intermediate of the active site.

Belongs to the NAD-dependent DNA ligase family. LigB subfamily.

It catalyses the reaction NAD(+) + (deoxyribonucleotide)n-3'-hydroxyl + 5'-phospho-(deoxyribonucleotide)m = (deoxyribonucleotide)n+m + AMP + beta-nicotinamide D-nucleotide.. In terms of biological role, catalyzes the formation of phosphodiester linkages between 5'-phosphoryl and 3'-hydroxyl groups in double-stranded DNA using NAD as a coenzyme and as the energy source for the reaction. This chain is DNA ligase B, found in Pseudomonas fluorescens (strain ATCC BAA-477 / NRRL B-23932 / Pf-5).